A 122-amino-acid polypeptide reads, in one-letter code: Large ribosomal subunit protein bL12 (122 aa).

It belongs to the bacterial ribosomal protein bL12 family. As to quaternary structure, homodimer. Part of the ribosomal stalk of the 50S ribosomal subunit. Forms a multimeric L10(L12)X complex, where L10 forms an elongated spine to which 2 to 4 L12 dimers bind in a sequential fashion. Binds GTP-bound translation factors.

Forms part of the ribosomal stalk which helps the ribosome interact with GTP-bound translation factors. Is thus essential for accurate translation. In Staphylococcus epidermidis (strain ATCC 35984 / DSM 28319 / BCRC 17069 / CCUG 31568 / BM 3577 / RP62A), this protein is Large ribosomal subunit protein bL12.